The following is a 228-amino-acid chain: Leucyl/phenylalanyl-tRNA--protein transferase (228 aa).

Belongs to the L/F-transferase family.

Its subcellular location is the cytoplasm. It catalyses the reaction N-terminal L-lysyl-[protein] + L-leucyl-tRNA(Leu) = N-terminal L-leucyl-L-lysyl-[protein] + tRNA(Leu) + H(+). The enzyme catalyses N-terminal L-arginyl-[protein] + L-leucyl-tRNA(Leu) = N-terminal L-leucyl-L-arginyl-[protein] + tRNA(Leu) + H(+). The catalysed reaction is L-phenylalanyl-tRNA(Phe) + an N-terminal L-alpha-aminoacyl-[protein] = an N-terminal L-phenylalanyl-L-alpha-aminoacyl-[protein] + tRNA(Phe). In terms of biological role, functions in the N-end rule pathway of protein degradation where it conjugates Leu, Phe and, less efficiently, Met from aminoacyl-tRNAs to the N-termini of proteins containing an N-terminal arginine or lysine. The sequence is that of Leucyl/phenylalanyl-tRNA--protein transferase from Thiobacillus denitrificans (strain ATCC 25259 / T1).